Here is a 187-residue protein sequence, read N- to C-terminus: Flavin prenyltransferase LpdB (187 aa).

FMN-binding positions include 10 to 12 (GAS), Ser37, 88 to 91 (SMKT), and Arg123. Dimethylallyl phosphate contacts are provided by Tyr153 and Lys169.

Belongs to the UbiX/PAD1 family.

The catalysed reaction is dimethylallyl phosphate + FMNH2 = prenylated FMNH2 + phosphate. Its function is as follows. Involved in tannin degradation. Flavin prenyltransferase that catalyzes the synthesis of the prenylated FMN cofactor (prenyl-FMN) for gallate decarboxylase LpdC. The prenyltransferase is metal-independent and links a dimethylallyl moiety from dimethylallyl monophosphate (DMAP) to the flavin N5 and C6 atoms of FMN. This chain is Flavin prenyltransferase LpdB, found in Lactiplantibacillus plantarum (strain ATCC BAA-793 / NCIMB 8826 / WCFS1) (Lactobacillus plantarum).